The following is a 179-amino-acid chain: ATP synthase subunit delta (179 aa).

The protein belongs to the ATPase delta chain family. F-type ATPases have 2 components, F(1) - the catalytic core - and F(0) - the membrane proton channel. F(1) has five subunits: alpha(3), beta(3), gamma(1), delta(1), epsilon(1). F(0) has three main subunits: a(1), b(2) and c(10-14). The alpha and beta chains form an alternating ring which encloses part of the gamma chain. F(1) is attached to F(0) by a central stalk formed by the gamma and epsilon chains, while a peripheral stalk is formed by the delta and b chains.

It localises to the cell inner membrane. Functionally, f(1)F(0) ATP synthase produces ATP from ADP in the presence of a proton or sodium gradient. F-type ATPases consist of two structural domains, F(1) containing the extramembraneous catalytic core and F(0) containing the membrane proton channel, linked together by a central stalk and a peripheral stalk. During catalysis, ATP synthesis in the catalytic domain of F(1) is coupled via a rotary mechanism of the central stalk subunits to proton translocation. Its function is as follows. This protein is part of the stalk that links CF(0) to CF(1). It either transmits conformational changes from CF(0) to CF(1) or is implicated in proton conduction. This chain is ATP synthase subunit delta, found in Thermosipho melanesiensis (strain DSM 12029 / CIP 104789 / BI429).